The sequence spans 401 residues: F-box protein At1g69090 (401 aa).

Residues 1 to 23 (MASPTLALAQSPPPKSPAVSVSQ) form a disordered region. The region spanning 27–74 (HCWSKLPLDLMQLVFERLAFLDFERAKSVCSSWQFGSKQSKPNNQIPW) is the F-box domain.

The protein is F-box protein At1g69090 of Arabidopsis thaliana (Mouse-ear cress).